A 212-amino-acid polypeptide reads, in one-letter code: Ribonuclease HII (212 aa).

The RNase H type-2 domain maps to 1–206; it reads MICGVDEAGK…VKNLLHQKNQ (206 aa). A divalent metal cation-binding residues include aspartate 6, glutamate 7, and aspartate 101.

Belongs to the RNase HII family. Requires Mn(2+) as cofactor. It depends on Mg(2+) as a cofactor.

It localises to the cytoplasm. The enzyme catalyses Endonucleolytic cleavage to 5'-phosphomonoester.. In terms of biological role, endonuclease that specifically degrades the RNA of RNA-DNA hybrids. This Methanospirillum hungatei JF-1 (strain ATCC 27890 / DSM 864 / NBRC 100397 / JF-1) protein is Ribonuclease HII.